Reading from the N-terminus, the 295-residue chain is 4-hydroxybenzoate octaprenyltransferase (295 aa).

Transmembrane regions (helical) follow at residues 28-48 (AGWL…AGGF), 51-71 (WHLL…GCCV), 101-121 (ALGV…TTNA), 124-144 (IAWS…KRFV), 159-179 (IPMA…WLVL), 220-240 (VMAF…PFGL), 242-262 (WPLH…WRLI), and 274-294 (FTGN…GFAL).

The protein belongs to the UbiA prenyltransferase family. Mg(2+) serves as cofactor.

It is found in the cell inner membrane. It carries out the reaction all-trans-octaprenyl diphosphate + 4-hydroxybenzoate = 4-hydroxy-3-(all-trans-octaprenyl)benzoate + diphosphate. It participates in cofactor biosynthesis; ubiquinone biosynthesis. Functionally, catalyzes the prenylation of para-hydroxybenzoate (PHB) with an all-trans polyprenyl group. Mediates the second step in the final reaction sequence of ubiquinone-8 (UQ-8) biosynthesis, which is the condensation of the polyisoprenoid side chain with PHB, generating the first membrane-bound Q intermediate 3-octaprenyl-4-hydroxybenzoate. This is 4-hydroxybenzoate octaprenyltransferase from Paracidovorax citrulli (strain AAC00-1) (Acidovorax citrulli).